We begin with the raw amino-acid sequence, 417 residues long: MFYKNDQIAGFDDSIWQAMEQEDKRQQDHVELIASENYTSARVMQAQGSQLTNKYAEGYPGKRYYGGCEHVDVIEQLAIDRAKELFGADYANVQPHSGSQANAAVFMALLKPGETVLGMSLAHGGHLTHGSKVSFSGKIYNAVQYGLNEVTGEIDYDEVARLAKEHQPKMIIAGFSAYSRVVDWQRFRDIADSIGAWLFVDMAHVAGLVAAGLYPNPVPIADVVTTTTHKTLRGPRGGLILAKQNDELAKKLNSAVFPAGQGGPLMHVIAAKAICFKEALGEGYVEYQQQVIDNAREMAKTFQTRGYNVVSGGTDNHLFLLDLIDKGITGKDADAALGRANITVNKNSVPNDPQSPFVTSGLRIGTPAITSRGFGLEEAAALTGWICDVLDDISNEQVIDDVRSKVLDLCEKNPVYR.

Residues Leu-121 and 125-127 contribute to the (6S)-5,6,7,8-tetrahydrofolate site; that span reads GHL. N6-(pyridoxal phosphate)lysine is present on Lys-230. 355–357 provides a ligand contact to (6S)-5,6,7,8-tetrahydrofolate; the sequence is SPF.

Belongs to the SHMT family. Homodimer. It depends on pyridoxal 5'-phosphate as a cofactor.

It localises to the cytoplasm. The catalysed reaction is (6R)-5,10-methylene-5,6,7,8-tetrahydrofolate + glycine + H2O = (6S)-5,6,7,8-tetrahydrofolate + L-serine. Its pathway is one-carbon metabolism; tetrahydrofolate interconversion. It participates in amino-acid biosynthesis; glycine biosynthesis; glycine from L-serine: step 1/1. In terms of biological role, catalyzes the reversible interconversion of serine and glycine with tetrahydrofolate (THF) serving as the one-carbon carrier. This reaction serves as the major source of one-carbon groups required for the biosynthesis of purines, thymidylate, methionine, and other important biomolecules. Also exhibits THF-independent aldolase activity toward beta-hydroxyamino acids, producing glycine and aldehydes, via a retro-aldol mechanism. This chain is Serine hydroxymethyltransferase 4, found in Colwellia psychrerythraea (strain 34H / ATCC BAA-681) (Vibrio psychroerythus).